Reading from the N-terminus, the 216-residue chain is Protein Syd (216 aa).

This sequence belongs to the Syd family.

Its subcellular location is the cell inner membrane. In terms of biological role, interacts with the SecY protein in vivo. May bind preferentially to an uncomplexed state of SecY, thus functioning either as a chelating agent for excess SecY in the cell or as a regulatory factor that negatively controls the translocase function. In Shewanella baltica (strain OS195), this protein is Protein Syd.